The sequence spans 71 residues: Probable ribosome maturation protein RlbA (71 aa).

Residues 12 to 69 (ITLGQFLKLADVIQSGGMAKWFLSEHEVLVNDEPDNRRGRKLYVGDVVEIEGFGSFQV) enclose the S4 RNA-binding domain.

In terms of biological role, may assist in the assembly of the 50S subunit. The chain is Probable ribosome maturation protein RlbA from Bacillus subtilis (strain 168).